We begin with the raw amino-acid sequence, 42 residues long: Photosystem I reaction center subunit IX (42 aa).

A helical membrane pass occupies residues 8-28; it reads YLSTIPVVGAIWLTFTAGFII.

This sequence belongs to the PsaJ family.

Its subcellular location is the plastid. It localises to the chloroplast thylakoid membrane. May help in the organization of the PsaE and PsaF subunits. The sequence is that of Photosystem I reaction center subunit IX from Gracilaria tenuistipitata var. liui (Red alga).